The following is a 551-amino-acid chain: Cation/acetate symporter ActP (551 aa).

13 helical membrane passes run 34-54 (IEAIVMFVLFVGATLYITYWA), 77-97 (GLAIAGDFMSAASFLGISALV), 104-124 (GLIYSIGFLIGWPIILFLIAE), 150-170 (LSACGSLVVVALYLIAQMVGA), 184-204 (VAVVLVGILMVMYVLFGGMLA), 207-227 (WVQIIKAVLLLAGASFMALMV), 263-283 (ISALSLGLALMFGTAGLPHIL), 304-324 (GFIGYFYILTFIIGFGAILLV), 356-376 (FFLGFISAVAFATILAVVAGL), 406-426 (VSKITVVVLGFVAIGLGILFE), 430-450 (IAFMVGLAFSIAASCNFPIIF), 469-489 (LGLLTAVILMILGPTIWVTIL), and 498-518 (YEYPALFSMIVAFVGIWFFSI).

The protein belongs to the sodium:solute symporter (SSF) (TC 2.A.21) family.

It is found in the cell inner membrane. Its function is as follows. Transports acetate. This Yersinia enterocolitica serotype O:8 / biotype 1B (strain NCTC 13174 / 8081) protein is Cation/acetate symporter ActP.